Consider the following 590-residue polypeptide: UvrABC system protein C (590 aa).

The GIY-YIG domain occupies 14–91 (DQPGCYLMKD…IKKYDPKYNV (78 aa)). One can recognise a UVR domain in the interval 196 to 231 (NEIKKELEAKMAEAAEKLEFERAKEFRDQLAHIEST).

This sequence belongs to the UvrC family. Interacts with UvrB in an incision complex.

The protein localises to the cytoplasm. The UvrABC repair system catalyzes the recognition and processing of DNA lesions. UvrC both incises the 5' and 3' sides of the lesion. The N-terminal half is responsible for the 3' incision and the C-terminal half is responsible for the 5' incision. This Bacillus velezensis (strain DSM 23117 / BGSC 10A6 / LMG 26770 / FZB42) (Bacillus amyloliquefaciens subsp. plantarum) protein is UvrABC system protein C.